The primary structure comprises 707 residues: Signal transducer and activator of transcription A (707 aa).

The span at 70 to 89 shows a compositional bias: polar residues; sequence LNQSDQFNLGRSNNLTPRTN. Residues 70-246 are disordered; the sequence is LNQSDQFNLG…GNPNLSSPQP (177 aa). Over residues 90-111 the composition is skewed to low complexity; it reads QLQQLQQQQQQQQQPQQQQQQQ. Residues 112-121 show a composition bias toward polar residues; that stretch reads TYGTQSPIHM. A compositionally biased stretch (low complexity) spans 142-238; sequence QQSYNNNNSN…QQQQQQQQGN (97 aa). Residues 242–356 adopt a coiled-coil conformation; sequence SSPQPILDTI…IQSILNPQHS (115 aa). Residues 443–487 mediate DNA binding; sequence KFLAGTRKCSVNLKFGVNIRDLDNVTTTVESDASNPFVVITNECQ. An SH2 domain is found at 583–686; the sequence is WQEGIIYGYM…FLKLHKDTAL (104 aa). Tyrosine 702 carries the post-translational modification Phosphotyrosine.

It belongs to the transcription factor STAT family. Monomer, in the absence of tyrosine phosphorylation. Homodimer, or heterodimer with another family member, when tyrosine phosphorylated. Tyrosine phosphorylated in response to cAMP. Not tyrosine phosphorylated in growing cells. Tyrosine phosphorylation is first detected at the tight mound stage, continues throughout the slug stage and early culmination, and starts to decrease at mid-culmination. Barely detectable in fruiting bodies.

It localises to the cytoplasm. The protein resides in the nucleus. Transcription factor that binds to 5'-TTGAATTGA-3' elements in the promoter region of target genes. Functions as a repressor of the ecmB gene. Regulates the differentiation of prestalk cells during development. This is Signal transducer and activator of transcription A (dstA) from Dictyostelium discoideum (Social amoeba).